The primary structure comprises 241 residues: NAD-dependent protein deacetylase 2 (241 aa).

In terms of domain architecture, Deacetylase sirtuin-type spans 1-241; the sequence is MTGKPLVAIL…ALPALLRGLG (241 aa). NAD(+)-binding residues include A13, T17, R25, Q92, V94, D95, and H112. Nicotinamide-binding residues include V94 and D95. The Proton acceptor role is filled by H112. The Zn(2+) site is built by C120, C123, C145, and C148. NAD(+) contacts are provided by T186, S187, N211, and I229.

The protein belongs to the sirtuin family. Class U subfamily. Zn(2+) is required as a cofactor.

The protein resides in the cytoplasm. It carries out the reaction N(6)-acetyl-L-lysyl-[protein] + NAD(+) + H2O = 2''-O-acetyl-ADP-D-ribose + nicotinamide + L-lysyl-[protein]. Its function is as follows. NAD-dependent protein deacetylase which modulates the activities of several enzymes which are inactive in their acetylated form. The protein is NAD-dependent protein deacetylase 2 of Streptomyces coelicolor (strain ATCC BAA-471 / A3(2) / M145).